We begin with the raw amino-acid sequence, 239 residues long: N-glycosylase/DNA lyase (239 aa).

8-oxoguanine contacts are provided by glutamine 24, serine 51, and tryptophan 62. The segment at 118-182 is helix-hairpin-helix; it reads ERYYEDMTLL…EDVRIIKLTR (65 aa). Lysine 142 (schiff-base intermediate with DNA) is an active-site residue. Phenylalanine 146 and proline 172 together coordinate 8-oxoguanine. The active site involves aspartate 174. The 8-oxoguanine site is built by aspartate 208 and tryptophan 212.

Belongs to the archaeal N-glycosylase/DNA lyase (AGOG) family.

The enzyme catalyses 2'-deoxyribonucleotide-(2'-deoxyribose 5'-phosphate)-2'-deoxyribonucleotide-DNA = a 3'-end 2'-deoxyribonucleotide-(2,3-dehydro-2,3-deoxyribose 5'-phosphate)-DNA + a 5'-end 5'-phospho-2'-deoxyribonucleoside-DNA + H(+). In terms of biological role, DNA repair enzyme that is part of the base excision repair (BER) pathway; protects from oxidative damage by removing the major product of DNA oxidation, 8-oxoguanine (GO), from single- and double-stranded DNA substrates. In Pyrococcus horikoshii (strain ATCC 700860 / DSM 12428 / JCM 9974 / NBRC 100139 / OT-3), this protein is N-glycosylase/DNA lyase.